Reading from the N-terminus, the 522-residue chain is Maturase K (522 aa).

The protein belongs to the intron maturase 2 family. MatK subfamily.

Its subcellular location is the plastid. The protein localises to the chloroplast. Usually encoded in the trnK tRNA gene intron. Probably assists in splicing its own and other chloroplast group II introns. The polypeptide is Maturase K (Gladiolus papilio (Goldblotch gladiolus)).